We begin with the raw amino-acid sequence, 220 residues long: Aspartic protease inhibitor 4 (220 aa).

A signal peptide spans 1–23 (MMKCLFLLCLCLLPILVFSSTFT). The propeptide occupies 24 to 32 (SQNPINLPS). Positions 26 to 31 (NPINLP) match the Vacuolar targeting signal motif. Residue N51 is glycosylated (N-linked (GlcNAc...) asparagine). 2 disulfides stabilise this stretch: C80/C125 and C174/C185.

Belongs to the protease inhibitor I3 (leguminous Kunitz-type inhibitor) family. As to expression, tubers.

The protein localises to the vacuole. Its function is as follows. Inhibits tightly cathepsin D (aspartic protease) and weakly trypsin (serine protease). May protect the plant by inhibiting proteases of invading organisms. This Solanum tuberosum (Potato) protein is Aspartic protease inhibitor 4.